The sequence spans 417 residues: UDP-N-acetylglucosamine 1-carboxyvinyltransferase (417 aa).

22–23 (KN) contributes to the phosphoenolpyruvate binding site. Arg-93 is a binding site for UDP-N-acetyl-alpha-D-glucosamine. The Proton donor role is filled by Cys-117. At Cys-117 the chain carries 2-(S-cysteinyl)pyruvic acid O-phosphothioketal. Residues 122–126 (RPVDL), Asp-305, and Ile-327 each bind UDP-N-acetyl-alpha-D-glucosamine.

It belongs to the EPSP synthase family. MurA subfamily.

The protein resides in the cytoplasm. The enzyme catalyses phosphoenolpyruvate + UDP-N-acetyl-alpha-D-glucosamine = UDP-N-acetyl-3-O-(1-carboxyvinyl)-alpha-D-glucosamine + phosphate. The protein operates within cell wall biogenesis; peptidoglycan biosynthesis. Cell wall formation. Adds enolpyruvyl to UDP-N-acetylglucosamine. In Thiobacillus denitrificans (strain ATCC 25259 / T1), this protein is UDP-N-acetylglucosamine 1-carboxyvinyltransferase.